The following is a 384-amino-acid chain: Protein V (384 aa).

Disordered stretches follow at residues 1-23 (MDQD…GGRE) and 38-317 (SEPT…TKKG). The span at 7–20 (ILKEDSEVEREAPG) shows a compositional bias: basic and acidic residues. The span at 50–59 (LHNTINTPQG) shows a compositional bias: polar residues. Ser68 bears the Phosphoserine; by host mark. Residues 83-101 (RSGEESRVSGRTSKPEAEA) are compositionally biased toward basic and acidic residues. At Ser125 the chain carries Phosphoserine; by host. The span at 150 to 168 (GIEDENREMAAHPDKRGED) shows a compositional bias: basic and acidic residues. Over residues 191–206 (ASNNGRSMEPGSSHSA) the composition is skewed to polar residues. A phosphoserine; by host mark is found at Ser192, Ser249, Ser257, and Ser260. Zn(2+) is bound by residues His318, Cys337, Cys341, Cys353, Cys355, Cys358, Cys362, and Cys365.

It belongs to the paramyxoviruses V protein family. In terms of assembly, interacts with host IFIH1/MDA5 and DHX58/LGP2. Interacts with host IRF3. Interacts with host RIGI regulatory protein (via CARDs domain) and host TRIM25 (via SPRY domain); these interactions prevent TRIM25-mediated ubiquitination of RIG-I and disrupts downstream RIG-I signaling.

The protein resides in the host cytoplasm. Plays an essential role in the inhibition of host immune response. Prevents the establishment of cellular antiviral state by blocking interferon-alpha/beta (IFN-alpha/beta) production and signaling pathway. Interacts with host IFIH1/MDA5 and DHX58/LGP2 to inhibit the transduction pathway involved in the activation of IFN-beta promoter, thus protecting the virus against cell antiviral state. Also interacts with and inhibits host IRF3. Blocks the type I interferon signaling pathway by disrupting the RIG-I signaling pathway. The polypeptide is Protein V (P/V/C) (Sendai virus (strain Fushimi) (SeV)).